We begin with the raw amino-acid sequence, 111 residues long: Latartoxin-2b (111 aa).

The first 19 residues, 1–19 (MKVLVIIALCFFILQTALS), serve as a signal peptide directing secretion. The propeptide at 20 to 43 (EDKYESFESYVEDLKSGNMKGEAR) is removed in mature form. The Processing quadruplet motif motif lies at 40 to 43 (GEAR). Disulfide bonds link Cys45–Cys62, Cys52–Cys73, Cys61–Cys87, Cys75–Cys85, and Cys78–Cys99. A Valine amide modification is found at Val110.

It belongs to the neurotoxin 19 (CSTX) family. 11 (latartoxin) subfamily. Post-translationally, contains 5 disulfide bonds. Cleavage of the propeptide depends on the processing quadruplet motif (XXXR, with at least one of X being E). As to expression, expressed by the venom gland.

It localises to the secreted. Functionally, insect toxin. The protein is Latartoxin-2b of Lachesana tarabaevi (Spider).